We begin with the raw amino-acid sequence, 760 residues long: MGLPALEFSECCLDSPQFRERLRSHEAELEKTNKFIKELIKDGKSLIAALKNLSSAKRKFADSLNEFKFRCIGDAETDDEICIAKSLQEFATVLRNLEDERMRMIENASEVLITPLEKFRKEQIGAAKDAKKKYDKETEKYCGVLEKHLNLSSKKKESQLQEADSQVDLVRQHFYEVSLEYVFKVQEVQERKMFEFVEPLLAFLQGLFTFYHHGYELAKDFSDFKTELTISIQNTRNRFEGTRSEVESLMKKMKENPHEHKNISPYTMEGYLYVQEKRHFGTSWVKHYCTYQRESKRITMVPFDQKSGGKGGEDEAVILKSCTRRKTDSIEKRFCFDVEAVDRPGVITMQALSEEDRRLWMEAMDGREPVYNSNKDNQSEGTAQLDSIGFSIIKKCIHAVETRGINEQGLYRIVGVNSRVQKLLSILMDPKTATETETEICAEWEIKTITSALKTYLRMLPGPLMMYQFQRSFIKAAKLENQESRVSEIHSLVHRLPEKNRQMLHLLMNHLAKVADNHKQNLMTVANLGVVFGPTLLRPQEETVAAIMDIKFQNIVIEILIENHEKIFNTVPETPPSNSQLLLSRKKSTDSKPPSCSERPLTLFHTAQPNEKQESRNSIINSSLESVISSNANSFLNSNSAPQSNLNSSDLELEVIKPNRPNSLPQNPSPTSPLSPSWPMFSAPSSPMPTSSTSSDSSPISSPLRKARALYACKAEHDSELSFTAGTVFDNVHPSQEPGWLEGTLNGKTGLIPENYVEFL.

Residues 7–262 enclose the BAR domain; it reads EFSECCLDSP…MKENPHEHKN (256 aa). In terms of domain architecture, PH spans 265 to 369; the sequence is PYTMEGYLYV…WMEAMDGREP (105 aa). Residues 383-568 enclose the Rho-GAP domain; that stretch reads AQLDSIGFSI…ILIENHEKIF (186 aa). 2 disordered regions span residues 571–617 and 658–701; these read VPET…ESRN and PNRP…SPIS. Residues 605 to 617 are compositionally biased toward polar residues; sequence HTAQPNEKQESRN. Residues 674-701 are compositionally biased toward low complexity; the sequence is LSPSWPMFSAPSSPMPTSSTSSDSSPIS. One can recognise an SH3 domain in the interval 702-760; that stretch reads SPLRKARALYACKAEHDSELSFTAGTVFDNVHPSQEPGWLEGTLNGKTGLIPENYVEFL.

Binds to the C-terminus of PTK2/FAK1. Detected in embryonic brain and liver, and at low levels in embryonic eye, heart, lung, intestine and skeletal muscle.

The protein resides in the cell junction. Its subcellular location is the focal adhesion. It localises to the cytoplasm. The protein localises to the cytoskeleton. It is found in the endosome membrane. Its function is as follows. GTPase-activating protein for RHOA and CDC42. May be involved in the regulation of neosynthesized protein export through a Rab-endososomal dependent export route. The sequence is that of Rho GTPase-activating protein 26 (ARHGAP26) from Gallus gallus (Chicken).